The following is a 455-amino-acid chain: tRNA modification GTPase MnmE (455 aa).

Residues arginine 24, glutamate 86, and arginine 125 each contribute to the (6S)-5-formyl-5,6,7,8-tetrahydrofolate site. In terms of domain architecture, TrmE-type G spans 220–376 (GLTVAIIGRP…LETAILETVQ (157 aa)). Asparagine 230 is a binding site for K(+). GTP-binding positions include 230-235 (NVGKSS), 249-255 (TDLPGTT), and 274-277 (DTAG). Mg(2+) is bound at residue serine 234. The K(+) site is built by threonine 249, leucine 251, and threonine 254. Threonine 255 contacts Mg(2+). Lysine 455 provides a ligand contact to (6S)-5-formyl-5,6,7,8-tetrahydrofolate.

Belongs to the TRAFAC class TrmE-Era-EngA-EngB-Septin-like GTPase superfamily. TrmE GTPase family. In terms of assembly, homodimer. Heterotetramer of two MnmE and two MnmG subunits. K(+) is required as a cofactor.

The protein localises to the cytoplasm. Functionally, exhibits a very high intrinsic GTPase hydrolysis rate. Involved in the addition of a carboxymethylaminomethyl (cmnm) group at the wobble position (U34) of certain tRNAs, forming tRNA-cmnm(5)s(2)U34. The chain is tRNA modification GTPase MnmE from Acaryochloris marina (strain MBIC 11017).